Consider the following 580-residue polypeptide: Glutamine--tRNA ligase (580 aa).

The short motif at 41–51 (PEPNGYLHIGH) is the 'HIGH' region element. ATP-binding positions include 42-44 (EPN) and 48-54 (HIGHAKA). L-glutamine contacts are provided by aspartate 74 and tyrosine 218. ATP contacts are provided by residues threonine 237, 285–286 (RL), and 293–295 (MSK). Positions 292 to 296 (VMSKR) match the 'KMSKS' region motif.

This sequence belongs to the class-I aminoacyl-tRNA synthetase family. Monomer.

It is found in the cytoplasm. It carries out the reaction tRNA(Gln) + L-glutamine + ATP = L-glutaminyl-tRNA(Gln) + AMP + diphosphate. This chain is Glutamine--tRNA ligase, found in Xylella fastidiosa (strain M12).